Here is a 249-residue protein sequence, read N- to C-terminus: Small ribosomal subunit protein eS6 (249 aa).

K14 participates in a covalent cross-link: Glycyl lysine isopeptide (Lys-Gly) (interchain with G-Cter in SUMO2). E35 is subject to ADP-ribosyl glutamic acid. R137 bears the (3R)-3-hydroxyarginine mark. S148 carries the phosphoserine modification. K211 is modified (N6-acetyllysine). Residues 217 to 229 are compositionally biased toward basic and acidic residues; that stretch reads MKEAKEKRQEQIA. The tract at residues 217 to 249 is disordered; that stretch reads MKEAKEKRQEQIAKRRRLSSLRASTSKSESSQK. S235 and S236 each carry phosphoserine; by RPS6KA1, RPS6KA3, DAPK1 and PASK. The segment covering 236–249 has biased composition (low complexity); it reads SLRASTSKSESSQK. S240, S242, S244, and S247 each carry phosphoserine.

It belongs to the eukaryotic ribosomal protein eS6 family. In terms of assembly, component of the small ribosomal subunit. Part of the small subunit (SSU) processome, composed of more than 70 proteins and the RNA chaperone small nucleolar RNA (snoRNA) U3. Post-translationally, ribosomal protein S6 is the major substrate of protein kinases in eukaryote ribosomes. The phosphorylation is stimulated by growth factors, tumor promoting agents, and mitogens. It is dephosphorylated at growth arrest. Phosphorylated at Ser-235 and Ser-236 by RPS6KA1 and RPS6KA3; phosphorylation at these sites facilitates the assembly of the pre-initiation complex. Specifically hydroxylated (with R stereochemistry) at C-3 of Arg-137 by KDM8. In terms of processing, mono-ADP-ribosylation at Glu-35 by PARP16 inhibits polysome assembly and mRNA loading, thereby inhibiting protein translation.

The protein localises to the cytoplasm. The protein resides in the nucleus. It localises to the nucleolus. Functionally, component of the 40S small ribosomal subunit. Plays an important role in controlling cell growth and proliferation through the selective translation of particular classes of mRNA. Part of the small subunit (SSU) processome, first precursor of the small eukaryotic ribosomal subunit. During the assembly of the SSU processome in the nucleolus, many ribosome biogenesis factors, an RNA chaperone and ribosomal proteins associate with the nascent pre-rRNA and work in concert to generate RNA folding, modifications, rearrangements and cleavage as well as targeted degradation of pre-ribosomal RNA by the RNA exosome. In Bos taurus (Bovine), this protein is Small ribosomal subunit protein eS6 (RPS6).